A 74-amino-acid polypeptide reads, in one-letter code: MKQIFIGIIRFYQKCISPLTPPSCRFYPTCSNYGLEAIKTHGALKGGWLTIKRILKCHPLHPGGIDPVPPKKEK.

It belongs to the UPF0161 family.

It localises to the cell membrane. Its function is as follows. Could be involved in insertion of integral membrane proteins into the membrane. The sequence is that of Putative membrane protein insertion efficiency factor from Bacillus pumilus (strain SAFR-032).